Consider the following 240-residue polypeptide: Octanoyltransferase (240 aa).

The disordered stretch occupies residues 1–22; it reads MGTTGTNDGATTPPANTSTPAV. The segment covering 10–21 has biased composition (low complexity); the sequence is ATTPPANTSTPA. In terms of domain architecture, BPL/LPL catalytic spans 51 to 236; sequence EKIPDTILLL…NLVDALNGDL (186 aa). Residues 89–96, 166–168, and 179–181 each bind substrate; these read RGGRITWH, AIG, and GVA. Cys197 functions as the Acyl-thioester intermediate in the catalytic mechanism.

It belongs to the LipB family.

It localises to the cytoplasm. The enzyme catalyses octanoyl-[ACP] + L-lysyl-[protein] = N(6)-octanoyl-L-lysyl-[protein] + holo-[ACP] + H(+). The protein operates within protein modification; protein lipoylation via endogenous pathway; protein N(6)-(lipoyl)lysine from octanoyl-[acyl-carrier-protein]: step 1/2. Its function is as follows. Catalyzes the transfer of endogenously produced octanoic acid from octanoyl-acyl-carrier-protein onto the lipoyl domains of lipoate-dependent enzymes. Lipoyl-ACP can also act as a substrate although octanoyl-ACP is likely to be the physiological substrate. The protein is Octanoyltransferase of Corynebacterium jeikeium (strain K411).